The following is a 127-amino-acid chain: Small ribosomal subunit protein uS13 (127 aa).

Residues 95-127 (GLPVHGQRTSTNARTRKGPRRAAVKKKGGAKKK) form a disordered region. Residues 108–127 (RTRKGPRRAAVKKKGGAKKK) show a composition bias toward basic residues.

Belongs to the universal ribosomal protein uS13 family. Part of the 30S ribosomal subunit. Forms a loose heterodimer with protein S19. Forms two bridges to the 50S subunit in the 70S ribosome.

Functionally, located at the top of the head of the 30S subunit, it contacts several helices of the 16S rRNA. In the 70S ribosome it contacts the 23S rRNA (bridge B1a) and protein L5 of the 50S subunit (bridge B1b), connecting the 2 subunits; these bridges are implicated in subunit movement. Contacts the tRNAs in the A and P-sites. This chain is Small ribosomal subunit protein uS13, found in Desulfatibacillum aliphaticivorans.